Consider the following 302-residue polypeptide: Deoxyhypusine hydroxylase-B (302 aa).

HEAT-like PBS-type repeat units lie at residues Leu49–Asp75, Val82–Val108, Met171–Lys200, Leu204–Asn230, and Val237–Asp263. His51, Glu52, His84, and Glu85 together coordinate Fe cation. Residues His206, Glu207, His239, and Glu240 each coordinate Fe cation.

It belongs to the deoxyhypusine hydroxylase family. Fe(2+) is required as a cofactor.

The catalysed reaction is [eIF5A protein]-deoxyhypusine + AH2 + O2 = [eIF5A protein]-hypusine + A + H2O. The protein operates within protein modification; eIF5A hypusination. Its function is as follows. Catalyzes the hydroxylation of the N(6)-(4-aminobutyl)-L-lysine intermediate to form hypusine, an essential post-translational modification only found in mature eIF-5A factor. The chain is Deoxyhypusine hydroxylase-B from Oryza sativa subsp. japonica (Rice).